A 351-amino-acid chain; its full sequence is MGRFEDDAEVEDREVSPALTVGEGDIDASLRPRSLGEFIGQPRVREQLQLVLEGAKKRGGTPDHILLSGPPGLGKTSLAMIIAAELGSSLRVTSGPALERAGDLAAMLSNLVEHDVLFIDEIHRIARPAEEMLYLAMEDFRVDVVVGKGPGATSIPLEVAPFTLVGATTRSGALTGPLRDRFGFTAHMDFYEPVELERVLARSAGILGIELGAEAGAEIARRSRGTPRIANRLLRRVRDFAEVRADGIITRDIAKSALEVYDVDELGLDRLDRAVLSALTRSFNGGPVGVSTLAVAVGEEATTVEEVCEPFLVRAGMIARTPRGRVATPLAWTHLGLQPPVTGIGQAGLFD.

Over residues 1 to 12 the composition is skewed to acidic residues; the sequence is MGRFEDDAEVED. A disordered region spans residues 1–23; the sequence is MGRFEDDAEVEDREVSPALTVGE. The tract at residues 1–191 is large ATPase domain (RuvB-L); it reads MGRFEDDAEV…FGFTAHMDFY (191 aa). Residues L30, R31, G72, K75, T76, S77, 138-140, R181, Y191, and R228 contribute to the ATP site; that span reads EDF. T76 contacts Mg(2+). The small ATPAse domain (RuvB-S) stretch occupies residues 192-262; it reads EPVELERVLA…IAKSALEVYD (71 aa). The segment at 265–351 is head domain (RuvB-H); the sequence is ELGLDRLDRA…TGIGQAGLFD (87 aa). Positions 320 and 325 each coordinate DNA.

Belongs to the RuvB family. As to quaternary structure, homohexamer. Forms an RuvA(8)-RuvB(12)-Holliday junction (HJ) complex. HJ DNA is sandwiched between 2 RuvA tetramers; dsDNA enters through RuvA and exits via RuvB. An RuvB hexamer assembles on each DNA strand where it exits the tetramer. Each RuvB hexamer is contacted by two RuvA subunits (via domain III) on 2 adjacent RuvB subunits; this complex drives branch migration. In the full resolvosome a probable DNA-RuvA(4)-RuvB(12)-RuvC(2) complex forms which resolves the HJ.

The protein resides in the cytoplasm. It catalyses the reaction ATP + H2O = ADP + phosphate + H(+). Its function is as follows. The RuvA-RuvB-RuvC complex processes Holliday junction (HJ) DNA during genetic recombination and DNA repair, while the RuvA-RuvB complex plays an important role in the rescue of blocked DNA replication forks via replication fork reversal (RFR). RuvA specifically binds to HJ cruciform DNA, conferring on it an open structure. The RuvB hexamer acts as an ATP-dependent pump, pulling dsDNA into and through the RuvAB complex. RuvB forms 2 homohexamers on either side of HJ DNA bound by 1 or 2 RuvA tetramers; 4 subunits per hexamer contact DNA at a time. Coordinated motions by a converter formed by DNA-disengaged RuvB subunits stimulates ATP hydrolysis and nucleotide exchange. Immobilization of the converter enables RuvB to convert the ATP-contained energy into a lever motion, pulling 2 nucleotides of DNA out of the RuvA tetramer per ATP hydrolyzed, thus driving DNA branch migration. The RuvB motors rotate together with the DNA substrate, which together with the progressing nucleotide cycle form the mechanistic basis for DNA recombination by continuous HJ branch migration. Branch migration allows RuvC to scan DNA until it finds its consensus sequence, where it cleaves and resolves cruciform DNA. This chain is Holliday junction branch migration complex subunit RuvB, found in Mycolicibacterium smegmatis (strain ATCC 700084 / mc(2)155) (Mycobacterium smegmatis).